The sequence spans 967 residues: RNA polymerase-associated protein RapA (967 aa).

In terms of domain architecture, Helicase ATP-binding spans 163–333; the sequence is EVGKRHNPRV…FARLRLLDPN (171 aa). Residue 176 to 183 coordinates ATP; it reads DEVGLGKT. Residues 279–282 carry the DEAH box motif; that stretch reads DEAH. Residues 489–660 enclose the Helicase C-terminal domain; the sequence is RVEWLLGFLT…NYLAQPNELG (172 aa).

It belongs to the SNF2/RAD54 helicase family. RapA subfamily. In terms of assembly, interacts with the RNAP. Has a higher affinity for the core RNAP than for the holoenzyme. Its ATPase activity is stimulated by binding to RNAP.

Functionally, transcription regulator that activates transcription by stimulating RNA polymerase (RNAP) recycling in case of stress conditions such as supercoiled DNA or high salt concentrations. Probably acts by releasing the RNAP, when it is trapped or immobilized on tightly supercoiled DNA. Does not activate transcription on linear DNA. Probably not involved in DNA repair. In Proteus mirabilis (strain HI4320), this protein is RNA polymerase-associated protein RapA.